The primary structure comprises 190 residues: Putative manganese efflux pump MntP (190 aa).

6 helical membrane-spanning segments follow: residues 6 to 26 (IWLLAISLAMDCFTVSITSGI), 36 to 56 (FFIMAFFFGLFQAVMPLIGWF), 61 to 81 (FSHLIEDYDHWIAFGLLAFWG), 108 to 128 (LAIATSIDALAIGISFAFVGI), 138 to 158 (IVIIGFTSFVISTLGSLIGVF), and 169 to 189 (LWGGLVLIIIGVKILIEHLFL).

The protein belongs to the MntP (TC 9.B.29) family.

The protein resides in the cell inner membrane. In terms of biological role, probably functions as a manganese efflux pump. In Phocaeicola vulgatus (strain ATCC 8482 / DSM 1447 / JCM 5826 / CCUG 4940 / NBRC 14291 / NCTC 11154) (Bacteroides vulgatus), this protein is Putative manganese efflux pump MntP.